The sequence spans 694 residues: Elongation factor G (694 aa).

The region spanning Glu8–Val287 is the tr-type G domain. GTP is bound by residues Ala17–Thr24, Asp86–His90, and Asn140–Asp143.

It belongs to the TRAFAC class translation factor GTPase superfamily. Classic translation factor GTPase family. EF-G/EF-2 subfamily.

Its subcellular location is the cytoplasm. Catalyzes the GTP-dependent ribosomal translocation step during translation elongation. During this step, the ribosome changes from the pre-translocational (PRE) to the post-translocational (POST) state as the newly formed A-site-bound peptidyl-tRNA and P-site-bound deacylated tRNA move to the P and E sites, respectively. Catalyzes the coordinated movement of the two tRNA molecules, the mRNA and conformational changes in the ribosome. In Bartonella quintana (strain Toulouse) (Rochalimaea quintana), this protein is Elongation factor G.